Consider the following 374-residue polypeptide: Transcription termination factor 1, mitochondrial (374 aa).

The transit peptide at Met1–Pro37 directs the protein to the mitochondrion. Interaction with DNA regions lie at residues Arg146–Ser147, Gln224–Arg228, Ser301–Lys308, Ser332–Thr335, and Ser361–Lys368.

This sequence belongs to the mTERF family. In terms of assembly, monomer. In terms of processing, is a phosphoprotein. While the DNA-binding activity is unaffected by the phosphorylation/dephosphorylation state, only the phosphorylated form of the protein is active for termination activity. Functioning seems to be regulated by phosphorylation.

The protein localises to the mitochondrion. Functionally, transcription termination factor. Binds to a 28 bp region within the tRNA(Leu(uur)) gene at a position immediately adjacent to and downstream of the 16S rRNA gene; this region comprises a tridecamer sequence critical for directing accurate termination. Binds DNA along the major grove and promotes DNA bending and partial unwinding. Promotes base flipping. Transcription termination activity appears to be polarized with highest specificity for transcripts initiated on the light strand. This is Transcription termination factor 1, mitochondrial (Mterf1) from Rattus norvegicus (Rat).